Consider the following 328-residue polypeptide: Phosphate acyltransferase (328 aa).

This sequence belongs to the PlsX family. As to quaternary structure, homodimer. Probably interacts with PlsY.

It is found in the cytoplasm. The catalysed reaction is a fatty acyl-[ACP] + phosphate = an acyl phosphate + holo-[ACP]. The protein operates within lipid metabolism; phospholipid metabolism. Catalyzes the reversible formation of acyl-phosphate (acyl-PO(4)) from acyl-[acyl-carrier-protein] (acyl-ACP). This enzyme utilizes acyl-ACP as fatty acyl donor, but not acyl-CoA. The polypeptide is Phosphate acyltransferase (Mycoplasma pneumoniae (strain ATCC 29342 / M129 / Subtype 1) (Mycoplasmoides pneumoniae)).